The following is a 180-amino-acid chain: MVIGVTGKIGTGKSTVCEILKNKYGAHVVNVDRIGHEVLEEVKEKLVELFGGSVLEDGKVNRKKLAGIVFESRENLKKLELLVHPLMKKRVQEIINKTSGLIVIEAALLKRMGLDQLCDHVITVVASRETILKRNREADRRLKFQEDIVPQGIVVANNSTLEDLEKKVEEVMKLVWEKRE.

A DPCK domain is found at 2 to 180 (VIGVTGKIGT…VMKLVWEKRE (179 aa)). ATP is bound at residue 10-15 (GTGKST).

This sequence belongs to the CoaE family.

The protein localises to the cytoplasm. It carries out the reaction 3'-dephospho-CoA + ATP = ADP + CoA + H(+). It participates in cofactor biosynthesis; coenzyme A biosynthesis; CoA from (R)-pantothenate: step 5/5. In terms of biological role, catalyzes the phosphorylation of the 3'-hydroxyl group of dephosphocoenzyme A to form coenzyme A. The polypeptide is Dephospho-CoA kinase (Thermotoga maritima (strain ATCC 43589 / DSM 3109 / JCM 10099 / NBRC 100826 / MSB8)).